We begin with the raw amino-acid sequence, 75 residues long: Sec-independent protein translocase protein TatA (75 aa).

Residues 1-21 (MGSFSIWHWLIVLVIVLLVFG) traverse the membrane as a helical segment. The tract at residues 41–75 (KGMHDDDKPAGKLGDDSRSAEQAREAQAERDRDAR) is disordered.

This sequence belongs to the TatA/E family. In terms of assembly, the Tat system comprises two distinct complexes: a TatABC complex, containing multiple copies of TatA, TatB and TatC subunits, and a separate TatA complex, containing only TatA subunits. Substrates initially bind to the TatABC complex, which probably triggers association of the separate TatA complex to form the active translocon.

The protein resides in the cell inner membrane. In terms of biological role, part of the twin-arginine translocation (Tat) system that transports large folded proteins containing a characteristic twin-arginine motif in their signal peptide across membranes. TatA could form the protein-conducting channel of the Tat system. The polypeptide is Sec-independent protein translocase protein TatA (Xanthomonas campestris pv. campestris (strain 8004)).